The primary structure comprises 268 residues: Proliferating cell nuclear antigen (268 aa).

A DNA-binding region spans residues 61-80; the sequence is RCDRNPSMGMNLNNMAKMLK.

It belongs to the PCNA family.

It is found in the nucleus. This protein is an auxiliary protein of DNA polymerase delta and is involved in the control of eukaryotic DNA replication by increasing the polymerase's processibility during elongation of the leading strand. The sequence is that of Proliferating cell nuclear antigen from Catharanthus roseus (Madagascar periwinkle).